Consider the following 198-residue polypeptide: Glycerol-3-phosphate acyltransferase (198 aa).

The next 5 helical transmembrane spans lie at 5 to 25, 56 to 76, 84 to 104, 114 to 134, and 158 to 178; these read LILL…LWIG, SIVT…PFFF, FWLL…FAGF, AGVI…VFLV, and LFMG…FVIW.

It belongs to the PlsY family. Probably interacts with PlsX.

It is found in the cell membrane. It carries out the reaction an acyl phosphate + sn-glycerol 3-phosphate = a 1-acyl-sn-glycero-3-phosphate + phosphate. The protein operates within lipid metabolism; phospholipid metabolism. Its function is as follows. Catalyzes the transfer of an acyl group from acyl-phosphate (acyl-PO(4)) to glycerol-3-phosphate (G3P) to form lysophosphatidic acid (LPA). This enzyme utilizes acyl-phosphate as fatty acyl donor, but not acyl-CoA or acyl-ACP. In Listeria monocytogenes serovar 1/2a (strain ATCC BAA-679 / EGD-e), this protein is Glycerol-3-phosphate acyltransferase.